A 234-amino-acid chain; its full sequence is FAS1 domain-containing protein AFUA_8G05360 (234 aa).

An N-terminal signal peptide occupies residues 1-21; that stretch reads MRRTLFVLFVVAFCFIGSVIA. Positions 83–231 constitute an FAS1 domain; sequence KPVVSDVLPK…GELWILNSVL (149 aa).

It is found in the vacuole. In Aspergillus fumigatus (strain ATCC MYA-4609 / CBS 101355 / FGSC A1100 / Af293) (Neosartorya fumigata), this protein is FAS1 domain-containing protein AFUA_8G05360.